The following is a 137-amino-acid chain: Basic phospholipase A2 homolog Ts-R6 (137 aa).

The first 16 residues, 1-16, serve as a signal peptide directing secretion; that stretch reads MRTLWIMAVLLLGVEG. 7 disulfides stabilise this stretch: Cys-42/Cys-130, Cys-44/Cys-60, Cys-59/Cys-110, Cys-65/Cys-137, Cys-66/Cys-103, Cys-73/Cys-97, and Cys-91/Cys-101.

In terms of tissue distribution, expressed by the venom gland.

The protein localises to the secreted. Functionally, snake venom phospholipase A2 homolog that induces local edema a few hours after injection (5-10 ug) in the hind paw and shows weak anticoagulant and myotoxic activities. The sequence is that of Basic phospholipase A2 homolog Ts-R6 from Trimeresurus stejnegeri (Chinese green tree viper).